We begin with the raw amino-acid sequence, 462 residues long: Cysteine--tRNA ligase (462 aa).

Cysteine 27 serves as a coordination point for Zn(2+). Residues 29–39 carry the 'HIGH' region motif; the sequence is PTVYDLAHIGN. Cysteine 211, histidine 236, and glutamate 240 together coordinate Zn(2+). The 'KMSKS' region signature appears at 270–274; it reads KMSKS. Residue lysine 273 coordinates ATP.

The protein belongs to the class-I aminoacyl-tRNA synthetase family. As to quaternary structure, monomer. Zn(2+) is required as a cofactor.

The protein resides in the cytoplasm. The enzyme catalyses tRNA(Cys) + L-cysteine + ATP = L-cysteinyl-tRNA(Cys) + AMP + diphosphate. In Anaplasma phagocytophilum (strain HZ), this protein is Cysteine--tRNA ligase.